We begin with the raw amino-acid sequence, 302 residues long: Acetylglutamate kinase (302 aa).

Residues 55-56 (GG), R77, and N176 contribute to the substrate site.

This sequence belongs to the acetylglutamate kinase family. ArgB subfamily.

It is found in the cytoplasm. The catalysed reaction is N-acetyl-L-glutamate + ATP = N-acetyl-L-glutamyl 5-phosphate + ADP. Its pathway is amino-acid biosynthesis; L-arginine biosynthesis; N(2)-acetyl-L-ornithine from L-glutamate: step 2/4. In terms of biological role, catalyzes the ATP-dependent phosphorylation of N-acetyl-L-glutamate. This Corynebacterium efficiens (strain DSM 44549 / YS-314 / AJ 12310 / JCM 11189 / NBRC 100395) protein is Acetylglutamate kinase.